The primary structure comprises 343 residues: E3 ubiquitin-protein ligase RNF113A (343 aa).

Ala-2 carries the post-translational modification N-acetylalanine. Residues 2–60 (AEQLSPGKTTDQVCTFLFKKPGRKVAAGRRKRPICNQESGDSSSSSDEGNTVVRPEKKR) are important for interaction with SNRNP200/BRR2. Ser-6 carries the phosphoserine modification. Residues 23–34 (GRKVAAGRRKRP) are compositionally biased toward basic residues. Residues 23–95 (GRKVAAGRRK…EEEEENKSES (73 aa)) are disordered. A compositionally biased stretch (low complexity) spans 39-50 (ESGDSSSSSDEG). The segment at 50–61 (GNTVVRPEKKRA) is important for interaction with CXCR4. 2 positions are modified to phosphoserine: Ser-84 and Ser-85. The segment at 196–224 (DYQPDICKDYKETGFCGFGDSCKFLHDRS) adopts a C3H1-type zinc-finger fold. Ser-253 is subject to Phosphoserine. The segment at 262–300 (CFICRQTFQNPVVTKCRHYFCESCALQHFRTTPRCYVCD) adopts an RING-type zinc-finger fold. Positions 323-343 (AEGGGASGFPEDPDEDPVPIT) are disordered. Residues 333 to 343 (EDPDEDPVPIT) show a composition bias toward acidic residues.

As to quaternary structure, component of pre-catalytic and catalytic spliceosome complexes. Interacts (via N-terminus) with the spliceosome subunit SNRNP200/BRR2. Component of the minor spliceosome. Within this complex, interacts with SCNM1 and CRIPT.

The protein localises to the nucleus. The protein resides in the nucleus speckle. It catalyses the reaction S-ubiquitinyl-[E2 ubiquitin-conjugating enzyme]-L-cysteine + [acceptor protein]-L-lysine = [E2 ubiquitin-conjugating enzyme]-L-cysteine + N(6)-ubiquitinyl-[acceptor protein]-L-lysine.. It functions in the pathway protein modification; protein ubiquitination. Functionally, required for pre-mRNA splicing as component of the spliceosome. As a component of the minor spliceosome, involved in the splicing of U12-type introns in pre-mRNAs. E3 ubiquitin-protein ligase that catalyzes the transfer of ubiquitin onto target proteins. Catalyzes polyubiquitination of SNRNP200/BRR2 with non-canonical 'Lys-63'-linked polyubiquitin chains. Plays a role in DNA repair via its role in the synthesis of 'Lys-63'-linked polyubiquitin chains that recruit ALKBH3 and the ASCC complex to sites of DNA damage by alkylating agents. Ubiquitinates CXCR4, leading to its degradation, and thereby contributes to the termination of CXCR4 signaling. The sequence is that of E3 ubiquitin-protein ligase RNF113A (RNF113A) from Bos taurus (Bovine).